The primary structure comprises 162 residues: NADH-quinone oxidoreductase subunit I (162 aa).

4Fe-4S ferredoxin-type domains follow at residues 53-83 (LRRY…IDSA) and 93-122 (TRYD…ETHI). [4Fe-4S] cluster is bound by residues cysteine 63, cysteine 66, cysteine 69, cysteine 73, cysteine 102, cysteine 105, cysteine 108, and cysteine 112.

Belongs to the complex I 23 kDa subunit family. NDH-1 is composed of 14 different subunits. Subunits NuoA, H, J, K, L, M, N constitute the membrane sector of the complex. [4Fe-4S] cluster is required as a cofactor.

The protein localises to the cell inner membrane. The catalysed reaction is a quinone + NADH + 5 H(+)(in) = a quinol + NAD(+) + 4 H(+)(out). Its function is as follows. NDH-1 shuttles electrons from NADH, via FMN and iron-sulfur (Fe-S) centers, to quinones in the respiratory chain. The immediate electron acceptor for the enzyme in this species is believed to be ubiquinone. Couples the redox reaction to proton translocation (for every two electrons transferred, four hydrogen ions are translocated across the cytoplasmic membrane), and thus conserves the redox energy in a proton gradient. This chain is NADH-quinone oxidoreductase subunit I, found in Xanthomonas oryzae pv. oryzae (strain MAFF 311018).